A 351-amino-acid chain; its full sequence is Fe(3+) ions import ATP-binding protein FbpC (351 aa).

The region spanning Leu9–Met239 is the ABC transporter domain. Position 41–48 (Gly41–Thr48) interacts with ATP.

This sequence belongs to the ABC transporter superfamily. Fe(3+) ion importer (TC 3.A.1.10) family. As to quaternary structure, the complex is composed of two ATP-binding proteins (FbpC), two transmembrane proteins (FbpB) and a solute-binding protein (FbpA).

It localises to the cell inner membrane. It carries out the reaction Fe(3+)(out) + ATP + H2O = Fe(3+)(in) + ADP + phosphate + H(+). In terms of biological role, part of the ABC transporter complex FbpABC involved in Fe(3+) ions import. Responsible for energy coupling to the transport system. The protein is Fe(3+) ions import ATP-binding protein FbpC of Mannheimia succiniciproducens (strain KCTC 0769BP / MBEL55E).